The chain runs to 70 residues: MPGVKVHPNESFDEAYRRFKKQTDRNLVVTEVRARRFFEPMTEIRKKQKISARKKMLKRLYMLRRYESRL.

Belongs to the bacterial ribosomal protein bS21 family.

The protein is Small ribosomal subunit protein bS21 of Campylobacter fetus subsp. fetus (strain 82-40).